We begin with the raw amino-acid sequence, 292 residues long: 2-methylisocitrate lyase (292 aa).

Ser44–Ala46 serves as a coordination point for substrate. Mg(2+)-binding residues include Asp84 and Asp86. Substrate contacts are provided by residues Cys121–Gly122, Arg156, Glu186, Asn208–Thr210, Arg239, and Arg268.

Belongs to the isocitrate lyase/PEP mutase superfamily. Methylisocitrate lyase family. Homotetramer; dimer of dimers. Mg(2+) serves as cofactor.

It catalyses the reaction (2S,3R)-3-hydroxybutane-1,2,3-tricarboxylate = pyruvate + succinate. The protein operates within organic acid metabolism; propanoate degradation. Involved in the catabolism of short chain fatty acids (SCFA) via the 2-methylcitrate cycle I (propionate degradation route). Catalyzes the thermodynamically favored C-C bond cleavage of (2R,3S)-2-methylisocitrate to yield pyruvate and succinate via an alpha-carboxy-carbanion intermediate. The sequence is that of 2-methylisocitrate lyase from Shewanella oneidensis (strain ATCC 700550 / JCM 31522 / CIP 106686 / LMG 19005 / NCIMB 14063 / MR-1).